The following is a 778-amino-acid chain: Lon protease (778 aa).

Residues 4–187 form the Lon N-terminal domain; the sequence is LPVLPLTDAV…LLVGWVRAHL (184 aa). 346-353 lines the ATP pocket; it reads GPPGVGKT. The Lon proteolytic domain occupies 581 to 762; sequence TAVPGVATGL…ADVLALALRP (182 aa). Catalysis depends on residues S668 and K711.

The protein belongs to the peptidase S16 family. Homohexamer. Organized in a ring with a central cavity.

It localises to the cytoplasm. It catalyses the reaction Hydrolysis of proteins in presence of ATP.. In terms of biological role, ATP-dependent serine protease that mediates the selective degradation of mutant and abnormal proteins as well as certain short-lived regulatory proteins. Required for cellular homeostasis and for survival from DNA damage and developmental changes induced by stress. Degrades polypeptides processively to yield small peptide fragments that are 5 to 10 amino acids long. Binds to DNA in a double-stranded, site-specific manner. The polypeptide is Lon protease (Salinispora arenicola (strain CNS-205)).